The following is a 415-amino-acid chain: Putative F-box protein At5g40050 (415 aa).

One can recognise an F-box domain in the interval Ile13–Ser59.

The sequence is that of Putative F-box protein At5g40050 from Arabidopsis thaliana (Mouse-ear cress).